The following is a 343-amino-acid chain: Proto-oncogene serine/threonine-protein kinase mos (343 aa).

The 277-residue stretch at 63–339 (VCLMHRLGSG…LLQRDLKAFR (277 aa)) folds into the Protein kinase domain. ATP is bound by residues 69–77 (LGSGGFGSV) and K90. The Proton acceptor role is filled by D198.

The protein belongs to the protein kinase superfamily. Ser/Thr protein kinase family. Interacts with MAP2K1/MEK1.

The protein localises to the cytoplasm. The catalysed reaction is L-seryl-[protein] + ATP = O-phospho-L-seryl-[protein] + ADP + H(+). It catalyses the reaction L-threonyl-[protein] + ATP = O-phospho-L-threonyl-[protein] + ADP + H(+). Serine/threonine kinase involved in the regulation of MAPK signaling. Is an activator of the ERK1/2 signaling cascade playing an essential role in the stimulation of oocyte maturation. The chain is Proto-oncogene serine/threonine-protein kinase mos from Mus musculus (Mouse).